The primary structure comprises 115 residues: NAD(P)H-quinone oxidoreductase subunit M (115 aa).

This sequence belongs to the complex I NdhM subunit family. NDH-1 can be composed of about 15 different subunits; different subcomplexes with different compositions have been identified which probably have different functions.

Its subcellular location is the cellular thylakoid membrane. The enzyme catalyses a plastoquinone + NADH + (n+1) H(+)(in) = a plastoquinol + NAD(+) + n H(+)(out). The catalysed reaction is a plastoquinone + NADPH + (n+1) H(+)(in) = a plastoquinol + NADP(+) + n H(+)(out). Functionally, NDH-1 shuttles electrons from an unknown electron donor, via FMN and iron-sulfur (Fe-S) centers, to quinones in the respiratory and/or the photosynthetic chain. The immediate electron acceptor for the enzyme in this species is believed to be plastoquinone. Couples the redox reaction to proton translocation, and thus conserves the redox energy in a proton gradient. Cyanobacterial NDH-1 also plays a role in inorganic carbon-concentration. This Prochlorococcus marinus (strain MIT 9303) protein is NAD(P)H-quinone oxidoreductase subunit M.